A 219-amino-acid chain; its full sequence is ATP synthase delta chain, chloroplastic (219 aa).

The transit peptide at 1–33 (MLAAKSIAGPRAFKASAVRAAPKAGRRTVVVMA) directs the protein to the chloroplast.

This sequence belongs to the ATPase delta chain family. As to quaternary structure, F-type ATPases have 2 components, F(1) - the catalytic core - and F(0) - the membrane proton channel. F(1) has five subunits: alpha(3), beta(3), gamma(1), delta(1), epsilon(1). F(0) has four main subunits: a(1), b(1), b'(1) and c(10-14). The alpha and beta chains form an alternating ring which encloses part of the gamma chain. F(1) is attached to F(0) by a central stalk formed by the gamma and epsilon chains, while a peripheral stalk is formed by the delta, b and b' chains.

The protein resides in the plastid. It localises to the chloroplast thylakoid membrane. Its function is as follows. F(1)F(0) ATP synthase produces ATP from ADP in the presence of a proton or sodium gradient. F-type ATPases consist of two structural domains, F(1) containing the extramembraneous catalytic core and F(0) containing the membrane proton channel, linked together by a central stalk and a peripheral stalk. During catalysis, ATP synthesis in the catalytic domain of F(1) is coupled via a rotary mechanism of the central stalk subunits to proton translocation. In terms of biological role, this protein seems to be part of the stalk that links CF(0) to CF(1). It either transmits conformational changes from CF(0) into CF(1) or is implicated in proton conduction. The chain is ATP synthase delta chain, chloroplastic from Chlamydomonas reinhardtii (Chlamydomonas smithii).